We begin with the raw amino-acid sequence, 468 residues long: MNIKTRFAPSPTGSIHIGNIRTALYSWLFARKQGGKFLLRIEDSDLQRSIDDTVELIVAGMRWLSLDWDEGPYFQTNRFSRYNSIISYMIQHDMAYKCYCSSERLESLRSNQIKNGEKPKYDGYCRFKSTDIYSSSISSYVVRFCNPQDGVVIFHDQIRGTITFNNKELDDLIIRRADGSPTYNFCVVIDDMDMQITHIIRGEEHINNTPRQINILKALRAPIPTYAHVSMILDNNLKKLSKRCGTLGIMQYRNDGFLPEAILNYLVRLGWSHGDQEIFSIEEMIKYFDLSRISKSPSILNLEKLLWLNHYYINHLPIDYVASHLSWHMHQQKINIQNGPKLTDIIKLFARRSRTLKEIVNNCLYFYIDFDLFDNKVAKDYLKPVAITPLKFLRKKFSNIVDWTPEIIKSIIIETVNEFNTSIDKIGMPLRVALTGTNCSPTLSITIHAIGQSRVLERIDQAIRYIST.

Residues 9–19 carry the 'HIGH' region motif; that stretch reads PSPTGSIHIGN. A 'KMSKS' region motif is present at residues 239–243; it reads KLSKR. ATP is bound at residue lysine 242.

The protein belongs to the class-I aminoacyl-tRNA synthetase family. Glutamate--tRNA ligase type 1 subfamily. Monomer.

It is found in the cytoplasm. It catalyses the reaction tRNA(Glu) + L-glutamate + ATP = L-glutamyl-tRNA(Glu) + AMP + diphosphate. Catalyzes the attachment of glutamate to tRNA(Glu) in a two-step reaction: glutamate is first activated by ATP to form Glu-AMP and then transferred to the acceptor end of tRNA(Glu). The chain is Glutamate--tRNA ligase from Blochmanniella pennsylvanica (strain BPEN).